We begin with the raw amino-acid sequence, 72 residues long: Neuropeptide IMFamide (72 aa).

Residues 1-24 form the signal peptide; sequence MMRFTIGVVCLVAVLLSLAEVSEA. Phenylalanine 36 is modified (phenylalanine amide). A propeptide spanning residues 40-72 is cleaved from the precursor; that stretch reads GPTEYDQRGKTFTALCEIATEACQAWFPSTENK.

Expressed in corpora cardiaca (CC), corpora allata (CA), antennal lobe (AL) and gnathal ganglion (GNG) (at protein level). Expression detected in only a few animals (at protein level).

Its subcellular location is the secreted. This Agrotis ipsilon (Black cutworm moth) protein is Neuropeptide IMFamide.